A 353-amino-acid polypeptide reads, in one-letter code: UDP-N-acetylglucosamine--N-acetylmuramyl-(pentapeptide) pyrophosphoryl-undecaprenol N-acetylglucosamine transferase (353 aa).

Residues 10-12, asparagine 124, serine 183, and glutamine 283 each bind UDP-N-acetyl-alpha-D-glucosamine; that span reads TGG.

The protein belongs to the glycosyltransferase 28 family. MurG subfamily.

The protein resides in the cell inner membrane. It carries out the reaction di-trans,octa-cis-undecaprenyl diphospho-N-acetyl-alpha-D-muramoyl-L-alanyl-D-glutamyl-meso-2,6-diaminopimeloyl-D-alanyl-D-alanine + UDP-N-acetyl-alpha-D-glucosamine = di-trans,octa-cis-undecaprenyl diphospho-[N-acetyl-alpha-D-glucosaminyl-(1-&gt;4)]-N-acetyl-alpha-D-muramoyl-L-alanyl-D-glutamyl-meso-2,6-diaminopimeloyl-D-alanyl-D-alanine + UDP + H(+). Its pathway is cell wall biogenesis; peptidoglycan biosynthesis. Cell wall formation. Catalyzes the transfer of a GlcNAc subunit on undecaprenyl-pyrophosphoryl-MurNAc-pentapeptide (lipid intermediate I) to form undecaprenyl-pyrophosphoryl-MurNAc-(pentapeptide)GlcNAc (lipid intermediate II). This Helicobacter pylori (strain G27) protein is UDP-N-acetylglucosamine--N-acetylmuramyl-(pentapeptide) pyrophosphoryl-undecaprenol N-acetylglucosamine transferase.